A 265-amino-acid polypeptide reads, in one-letter code: Speedy protein E13 (265 aa).

The disordered stretch occupies residues 1–80; the sequence is MGQILGKIMM…EPEKELAPEP (80 aa). The span at 66 to 80 shows a compositional bias: acidic residues; it reads DESDDEPEKELAPEP.

This sequence belongs to the Speedy/Ringo family.

The protein is Speedy protein E13 of Homo sapiens (Human).